Consider the following 126-residue polypeptide: MGKDKNPRRVAENEAMAKTRMLRTSPQKLNLVAQMIRGKKVDKALADLTFSHKRIAVDVKKCLQSAIANAENNHGLDVDELIVAEAWVGKNLTMKRGRPRARGRFGKIIKPFAEITIKVRQVEEQA.

It belongs to the universal ribosomal protein uL22 family. As to quaternary structure, part of the 50S ribosomal subunit.

This protein binds specifically to 23S rRNA; its binding is stimulated by other ribosomal proteins, e.g. L4, L17, and L20. It is important during the early stages of 50S assembly. It makes multiple contacts with different domains of the 23S rRNA in the assembled 50S subunit and ribosome. Its function is as follows. The globular domain of the protein is located near the polypeptide exit tunnel on the outside of the subunit, while an extended beta-hairpin is found that lines the wall of the exit tunnel in the center of the 70S ribosome. This is Large ribosomal subunit protein uL22 from Dinoroseobacter shibae (strain DSM 16493 / NCIMB 14021 / DFL 12).